Reading from the N-terminus, the 443-residue chain is GTPase Der (443 aa).

2 consecutive EngA-type G domains span residues 3-168 (PLLA…PEAP) and 178-353 (VHLA…RNRS). GTP-binding positions include 9 to 16 (GRPNVGKS), 56 to 60 (DTGGY), 120 to 123 (NKVE), 184 to 191 (GRPNVGKS), 231 to 235 (DTAGL), and 296 to 299 (NKWD). The KH-like domain occupies 354 to 438 (QNVSTSQLNK…PISLRFLHKN (85 aa)).

This sequence belongs to the TRAFAC class TrmE-Era-EngA-EngB-Septin-like GTPase superfamily. EngA (Der) GTPase family. As to quaternary structure, associates with the 50S ribosomal subunit.

Its function is as follows. GTPase that plays an essential role in the late steps of ribosome biogenesis. This chain is GTPase Der, found in Chlorobium chlorochromatii (strain CaD3).